A 98-amino-acid polypeptide reads, in one-letter code: NADH-ubiquinone oxidoreductase chain 4L (98 aa).

3 consecutive transmembrane segments (helical) span residues 1–21, 28–48, and 61–81; these read MASINLNIIMAFIMALMGVLI, STLLCLEGMMLSLFILVTLLI, and LILLVFSACEAGVGLALLVTI.

The protein belongs to the complex I subunit 4L family. Core subunit of respiratory chain NADH dehydrogenase (Complex I) which is composed of 45 different subunits.

Its subcellular location is the mitochondrion inner membrane. The catalysed reaction is a ubiquinone + NADH + 5 H(+)(in) = a ubiquinol + NAD(+) + 4 H(+)(out). Its function is as follows. Core subunit of the mitochondrial membrane respiratory chain NADH dehydrogenase (Complex I) which catalyzes electron transfer from NADH through the respiratory chain, using ubiquinone as an electron acceptor. Part of the enzyme membrane arm which is embedded in the lipid bilayer and involved in proton translocation. The protein is NADH-ubiquinone oxidoreductase chain 4L (MT-ND4L) of Thylamys elegans (Elegant fat-tailed mouse opossum).